Reading from the N-terminus, the 589-residue chain is Mini-chromosome maintenance complex-binding protein (589 aa).

The interval 163–211 (VDEEMTDSMDSSTLEAGRNGSPFKKMKVGEATSSASESQVPQTSGIPPA) is disordered. Residues 193 to 207 (ATSSASESQVPQTSG) show a composition bias toward polar residues.

Belongs to the MCMBP family. Interacts with the MCM complex.

Its subcellular location is the nucleus. Its function is as follows. Associated component of the MCM complex that acts as a regulator of DNA replication. Binds to the MCM complex during late S phase and may act by promoting the disassembly of the MCM complex from chromatin. Required for sister chromatid cohesion. The polypeptide is Mini-chromosome maintenance complex-binding protein (ETG1) (Arabidopsis thaliana (Mouse-ear cress)).